Here is a 342-residue protein sequence, read N- to C-terminus: Small ribosomal subunit protein uS2 (342 aa).

The disordered stretch occupies residues 235 to 283; the sequence is EENAPFEQDEPRKPSQKPKQNRPENKPRFDKQAPRAAAKPEVKAEVKPE. Residues 255-283 show a composition bias toward basic and acidic residues; it reads NRPENKPRFDKQAPRAAAKPEVKAEVKPE.

This sequence belongs to the universal ribosomal protein uS2 family.

In Acholeplasma laidlawii (strain PG-8A), this protein is Small ribosomal subunit protein uS2.